The following is a 257-amino-acid chain: MKLIEKTMSMNQFRTMEEEKQDGGELFHTIEVAKVDRNNVSQPPPAATAALLEVPGDELNLIPPLNFSMVDNGIFRSGFPDSANFSFIKTLGLRSIISLCPEPYPENNMQFLKSNGISLFQFGIEGSKSKCLPGLENEVWLHIWSSKHQKEDFYTNGNSKTSEPFVDILDQKIREALKVLLDEKNHPLLIHCKRGKHRTGCLVGCMRKLQKWCITSILDEYKRFAAAKARVSDQRFLESFDVSGLKHTPMSFSCSNR.

Residues 66 to 251 enclose the Tyrosine-protein phosphatase domain; sequence NFSMVDNGIF…VSGLKHTPMS (186 aa). 2 residues coordinate 1D-myo-inositol hexakisphosphate: Ile168 and Lys172. Cys192 functions as the Phosphocysteine intermediate in the catalytic mechanism.

It belongs to the protein-tyrosine phosphatase family. Atypical dual-specificity phosphatase Siw14-like subfamily. In terms of tissue distribution, expressed in roots, leaves, stems, flowers and siliques.

It catalyses the reaction 5-diphospho-1D-myo-inositol 1,2,3,4,6-pentakisphosphate + H2O = 1D-myo-inositol hexakisphosphate + phosphate + H(+). The catalysed reaction is 1,5-bis(diphospho)-1D-myo-inositol 2,3,4,6-tetrakisphosphate + H2O = 1-diphospho-1D-myo-inositol 2,3,4,5,6-pentakisphosphate + phosphate + 2 H(+). It carries out the reaction 3,5-bis(diphospho)-1D-myo-inositol 1,2,4,6-tetrakisphosphate + H2O = 3-diphospho-1D-myo-inositol 1,2,4,5,6-pentakisphosphate + phosphate + 2 H(+). The enzyme catalyses 6-diphospho-1D-myo-inositol pentakisphosphate + H2O = 1D-myo-inositol hexakisphosphate + phosphate + H(+). Its function is as follows. Cleaves the beta-phosphate at the 5-position of soluble inositol pyrophosphates. Has highest activity on 5-diphosphoinositol 1,2,3,4,6-pentakisphosphate (5-InsP(7)), 1,5-bis-diphosphoinositol 2,3,4,6-tetrakisphosphate (1,5-InsP(8)) and 3,5-InsP(8). Possesses phosphotyrosine phosphatase activity in vitro. Dephosphorylates the phosphoinositides PI(3,5)P2. Hydrolyzes para-nitrophenyl phosphate and O-methylfluorescein phosphate in vitro. This is Inositol diphosphatase DSP2 from Arabidopsis thaliana (Mouse-ear cress).